The sequence spans 616 residues: Endonuclease 8-like 3 (616 aa).

The FPG-type zinc-finger motif lies at 271 to 305; it reads KVYKRPNCGQCGTKITVCRLGEHNRMTYFCPKCQK. The segment at 341–370 adopts a RanBP2-type zinc-finger fold; it reads KEEHWACAVCTLINKPSDKQCDACLTLRPE. The interval 491 to 524 is disordered; it reads LKTGHTTSNTIHLSSTISSPQSKMTGDAAAKTGN. Positions 494-514 are enriched in polar residues; it reads GHTTSNTIHLSSTISSPQSKM. Cys-527, His-530, Cys-553, Cys-561, Cys-574, His-576, Cys-599, and Cys-607 together coordinate Zn(2+). 2 consecutive GRF-type zinc fingers follow at residues 527-570 and 574-616; these read CSAH…ADLH and CNHG…AKTE.

This sequence belongs to the FPG family.

Its subcellular location is the nucleus. The protein resides in the chromosome. It carries out the reaction 2'-deoxyribonucleotide-(2'-deoxyribose 5'-phosphate)-2'-deoxyribonucleotide-DNA = a 3'-end 2'-deoxyribonucleotide-(2,3-dehydro-2,3-deoxyribose 5'-phosphate)-DNA + a 5'-end 5'-phospho-2'-deoxyribonucleoside-DNA + H(+). DNA glycosylase which prefers single-stranded DNA (ssDNA), or partially ssDNA structures such as bubble and fork structures, to double-stranded DNA (dsDNA). Mediates interstrand cross-link repair in response to replication stress: recruited to replication stress sites via interaction with ubiquitinated CMG helicase and acts by mediating DNA glycosylase activity. Cleaves one of the two N-glycosyl bonds comprising the interstrand cross-link, which avoids the formation of a double-strand break but generates an abasic site that is bypassed by translesion synthesis polymerases. In Xenopus laevis (African clawed frog), this protein is Endonuclease 8-like 3.